The following is a 158-amino-acid chain: MSDEEHHFESSDAGASKTYPQQAGTIRKNGYIVIKNRPCKVVEVSTSKTGKHGHAKCHFVAIDIFTSKKLEDIVPSSHNCDVPHVNRTDYQLIDISEDGYVSLLTDNGSTKDDLKLPNDDTLLQQIKSGFDDGKDLVVSVMSAMGEEQINALKDIGPK.

The segment covering methionine 1–serine 10 has biased composition (basic and acidic residues). The interval methionine 1–glutamine 21 is disordered. Residue serine 2 is modified to Phosphoserine. Lysine 51 carries the hypusine modification.

It belongs to the eIF-5A family. Post-translationally, lys-51 undergoes hypusination, a unique post-translational modification that consists in the addition of a butylamino group from spermidine to lysine side chain, leading to the formation of the unusual amino acid hypusine. eIF-5As are the only known proteins to undergo this modification, which is essential for their function. In terms of tissue distribution, expressed in leaf vasculature and inflorescence stems. Present in xylem tissue but not in phloem, and in developing vessel members, but not in mature vessels members. Detected in anthers.

Its function is as follows. Translation factor that promotes translation elongation and termination, particularly upon ribosome stalling at specific amino acid sequence contexts. Binds between the exit (E) and peptidyl (P) site of the ribosome and promotes rescue of stalled ribosome: specifically required for efficient translation of polyproline-containing peptides as well as other motifs that stall the ribosome. Acts as a ribosome quality control (RQC) cofactor by joining the RQC complex to facilitate peptidyl transfer during CAT tailing step. Involved in xylogenesis. This chain is Eukaryotic translation initiation factor 5A-1 (ELF5A-1), found in Arabidopsis thaliana (Mouse-ear cress).